A 516-amino-acid polypeptide reads, in one-letter code: MLWEFFALFAIAAALFYRWASANNDFFKDRGIAYEKPVLYFGNMAGMFLRKRAMFDIVCDLYTKGGSKKFFGIFEQRQPLLMVRDPDLIKQITIKDFDHFINHRNVFATSSDDDPHDMSNLFGSSLFSMRDARWKDMRSTLSPAFTGSKMRQMFQLMNQVAKEAVDCLKQDDSRVQENELDMKDYCTRFTNDVIASTAFGLQVNSFKDRENTFYQMGKKLTTFTFLQSMKFMLFFALKGLNKILKVELFDRKSTQYFVRLVLDAMKYRQEHNIVRPDMINMLMEARGIIQTEKTKASAVREWSDRDIVAQCFVFFFAGFETSAVLMCFTAHELMENQDVQQRLYEEVQQVDQDLEGKELTYEAIMGMKYLDQVVNEVLRKWPAAIAVDRECNKDITFDVDGQKVEVKKGDVIWLPTCGFHRDPKYFENPMKFDPERFSDENKESIQPFTYFPFGLGQRNCIGSRFALLEAKAVIYYLLKDYRFAPAKKSCIPLELITSGFQLSPKGGFWIKLVQRN.

Position 460 (Cys-460) interacts with heme.

This sequence belongs to the cytochrome P450 family. Heme is required as a cofactor.

Its subcellular location is the endoplasmic reticulum membrane. The protein resides in the microsome membrane. Its function is as follows. May be involved in the metabolism of insect hormones and in the breakdown of synthetic insecticides. This is Probable cytochrome P450 9f2 (Cyp9f2) from Drosophila melanogaster (Fruit fly).